A 321-amino-acid polypeptide reads, in one-letter code: GDP-L-fucose synthase (321 aa).

Residues 10–16 (GHRGMVG), 36–41 (RDELNL), and 105–108 (LGSS) contribute to the NADP(+) site. The active-site Proton donor/acceptor is the Tyr-136. NADP(+) is bound by residues Lys-140, 163-166 (PTNL), and His-179. Substrate-binding residues include Arg-187, Trp-202, Arg-209, and Asp-278.

Belongs to the NAD(P)-dependent epimerase/dehydratase family. Fucose synthase subfamily. Homodimer.

It is found in the cytoplasm. The enzyme catalyses GDP-beta-L-fucose + NADP(+) = GDP-4-dehydro-alpha-D-rhamnose + NADPH + H(+). The protein operates within nucleotide-sugar biosynthesis; GDP-L-fucose biosynthesis via de novo pathway; GDP-L-fucose from GDP-alpha-D-mannose: step 2/2. Its pathway is exopolysaccharide biosynthesis; colanic acid biosynthesis. Its activity is regulated as follows. Subject to product inhibition by NADP and GDP-fucose. Catalyzes the two-step NADP-dependent conversion of GDP-4-dehydro-6-deoxy-D-mannose to GDP-fucose, involving an epimerase and a reductase reaction. The polypeptide is GDP-L-fucose synthase (Escherichia coli (strain K12)).